Here is a 443-residue protein sequence, read N- to C-terminus: Phosphoglucosamine mutase (443 aa).

Catalysis depends on Ser-101, which acts as the Phosphoserine intermediate. The Mg(2+) site is built by Ser-101, Asp-239, Asp-241, and Asp-243. Ser-101 carries the post-translational modification Phosphoserine.

This sequence belongs to the phosphohexose mutase family. It depends on Mg(2+) as a cofactor. Post-translationally, activated by phosphorylation.

It carries out the reaction alpha-D-glucosamine 1-phosphate = D-glucosamine 6-phosphate. Its function is as follows. Catalyzes the conversion of glucosamine-6-phosphate to glucosamine-1-phosphate. This chain is Phosphoglucosamine mutase, found in Francisella tularensis subsp. tularensis (strain FSC 198).